We begin with the raw amino-acid sequence, 205 residues long: MGNIMDGKSVEELSSTECHQWYKKFMTECPSGQLTLYEFRQFFGLKNLSPWASQYVEQMFETFDFNKDGYIDFMEYVAALSLVLKGKVEQKLRWYFKLYDVDGNGCIDRDELLTIIRAIRAINPCSDSTMTAEEFTDTVFSKIDVNGDGELSLEEFMEGVQKDQMLLDTLTRSLDLTRIVRRLQNGEQDEEGASGRETEAAEADG.

The N-myristoyl glycine moiety is linked to residue Gly-2. Residue Asn-3 is modified to Deamidated asparagine. EF-hand domains follow at residues 14–49 (SSTE…KNLS), 51–86 (WASQ…VLKG), 87–122 (KVEQ…IRAI), and 131–166 (TAEE…DQML). Residues Asp-64, Asn-66, Asp-68, Tyr-70, Glu-75, Asp-100, Asp-102, Asn-104, Cys-106, Glu-111, Asp-144, Asn-146, Asp-148, Glu-150, and Glu-155 each coordinate Ca(2+). The tract at residues 185–205 (NGEQDEEGASGRETEAAEADG) is disordered.

As to quaternary structure, homodimer. As to expression, detected in the retina. Detected in rod and cone photoreceptor cells (at protein level). Also present in certain pinealocytes.

It is found in the membrane. The protein resides in the photoreceptor inner segment. Its subcellular location is the cell projection. The protein localises to the cilium. It localises to the photoreceptor outer segment. Stimulates retinal guanylyl cyclase when free calcium ions concentration is low and inhibits guanylyl cyclase when free calcium ions concentration is elevated. This Ca(2+)-sensitive regulation of retinal guanylyl cyclase is a key event in recovery of the dark state of rod photoreceptors following light exposure. May be involved in cone photoreceptor light response and recovery of response in bright light. This chain is Guanylyl cyclase-activating protein 1 (GUCA1A), found in Bos taurus (Bovine).